The following is a 159-amino-acid chain: Phosphopantetheine adenylyltransferase (159 aa).

Substrate is bound at residue T10. ATP is bound by residues 10 to 11 (TF) and H18. Positions 42, 74, and 88 each coordinate substrate. ATP is bound by residues 89–91 (GLR), E99, and 124–130 (YSFISSS).

It belongs to the bacterial CoaD family. As to quaternary structure, homohexamer. Mg(2+) serves as cofactor.

It is found in the cytoplasm. The enzyme catalyses (R)-4'-phosphopantetheine + ATP + H(+) = 3'-dephospho-CoA + diphosphate. It participates in cofactor biosynthesis; coenzyme A biosynthesis; CoA from (R)-pantothenate: step 4/5. Functionally, reversibly transfers an adenylyl group from ATP to 4'-phosphopantetheine, yielding dephospho-CoA (dPCoA) and pyrophosphate. This is Phosphopantetheine adenylyltransferase from Campylobacter hominis (strain ATCC BAA-381 / DSM 21671 / CCUG 45161 / LMG 19568 / NCTC 13146 / CH001A).